The sequence spans 110 residues: UPF0060 membrane protein SACE_5620 (110 aa).

The next 4 helical transmembrane spans lie at valine 8–glycine 28, glycine 34–phenylalanine 54, isoleucine 63–aspartate 83, and arginine 89–proline 109.

The protein belongs to the UPF0060 family.

The protein resides in the cell membrane. This Saccharopolyspora erythraea (strain ATCC 11635 / DSM 40517 / JCM 4748 / NBRC 13426 / NCIMB 8594 / NRRL 2338) protein is UPF0060 membrane protein SACE_5620.